Consider the following 63-residue polypeptide: Cytochrome c oxidase subunit 7C, mitochondrial (63 aa).

A mitochondrion-targeting transit peptide spans Met-1–Arg-16. Residues Ser-17 to Asn-33 lie on the Mitochondrial matrix side of the membrane. Lys-25 carries the post-translational modification N6-acetyllysine; alternate. At Lys-25 the chain carries N6-succinyllysine; alternate. A helical membrane pass occupies residues Lys-34 to Leu-60. Residues Leu-61–Gln-63 lie on the Mitochondrial intermembrane side of the membrane.

The protein belongs to the cytochrome c oxidase VIIc family. As to quaternary structure, component of the cytochrome c oxidase (complex IV, CIV), a multisubunit enzyme composed of 14 subunits. The complex is composed of a catalytic core of 3 subunits MT-CO1, MT-CO2 and MT-CO3, encoded in the mitochondrial DNA, and 11 supernumerary subunits COX4I, COX5A, COX5B, COX6A, COX6B, COX6C, COX7A, COX7B, COX7C, COX8 and NDUFA4, which are encoded in the nuclear genome. The complex exists as a monomer or a dimer and forms supercomplexes (SCs) in the inner mitochondrial membrane with NADH-ubiquinone oxidoreductase (complex I, CI) and ubiquinol-cytochrome c oxidoreductase (cytochrome b-c1 complex, complex III, CIII), resulting in different assemblies (supercomplex SCI(1)III(2)IV(1) and megacomplex MCI(2)III(2)IV(2)). Interacts with RAB5IF.

It localises to the mitochondrion inner membrane. Its pathway is energy metabolism; oxidative phosphorylation. Component of the cytochrome c oxidase, the last enzyme in the mitochondrial electron transport chain which drives oxidative phosphorylation. The respiratory chain contains 3 multisubunit complexes succinate dehydrogenase (complex II, CII), ubiquinol-cytochrome c oxidoreductase (cytochrome b-c1 complex, complex III, CIII) and cytochrome c oxidase (complex IV, CIV), that cooperate to transfer electrons derived from NADH and succinate to molecular oxygen, creating an electrochemical gradient over the inner membrane that drives transmembrane transport and the ATP synthase. Cytochrome c oxidase is the component of the respiratory chain that catalyzes the reduction of oxygen to water. Electrons originating from reduced cytochrome c in the intermembrane space (IMS) are transferred via the dinuclear copper A center (CU(A)) of subunit 2 and heme A of subunit 1 to the active site in subunit 1, a binuclear center (BNC) formed by heme A3 and copper B (CU(B)). The BNC reduces molecular oxygen to 2 water molecules using 4 electrons from cytochrome c in the IMS and 4 protons from the mitochondrial matrix. The sequence is that of Cytochrome c oxidase subunit 7C, mitochondrial (COX7C) from Papio hamadryas (Hamadryas baboon).